Consider the following 256-residue polypeptide: Type III pantothenate kinase (256 aa).

6-13 is an ATP binding site; that stretch reads DVGNSHIY. Substrate is bound by residues Y99 and 106–109; that span reads GADR. Residue D108 is the Proton acceptor of the active site. K(+) is bound at residue D129. T132 contacts ATP. Residue T184 coordinates substrate.

The protein belongs to the type III pantothenate kinase family. In terms of assembly, homodimer. Requires NH4(+) as cofactor. K(+) serves as cofactor.

Its subcellular location is the cytoplasm. It catalyses the reaction (R)-pantothenate + ATP = (R)-4'-phosphopantothenate + ADP + H(+). Its pathway is cofactor biosynthesis; coenzyme A biosynthesis; CoA from (R)-pantothenate: step 1/5. In terms of biological role, catalyzes the phosphorylation of pantothenate (Pan), the first step in CoA biosynthesis. This chain is Type III pantothenate kinase, found in Legionella pneumophila (strain Corby).